Consider the following 328-residue polypeptide: 4-hydroxythreonine-4-phosphate dehydrogenase (328 aa).

His-133 and Thr-134 together coordinate substrate. A divalent metal cation-binding residues include His-163, His-208, and His-263. The substrate site is built by Lys-271, Asn-280, and Arg-289.

The protein belongs to the PdxA family. Homodimer. The cofactor is Zn(2+). Requires Mg(2+) as cofactor. Co(2+) is required as a cofactor.

The protein localises to the cytoplasm. It catalyses the reaction 4-(phosphooxy)-L-threonine + NAD(+) = 3-amino-2-oxopropyl phosphate + CO2 + NADH. The protein operates within cofactor biosynthesis; pyridoxine 5'-phosphate biosynthesis; pyridoxine 5'-phosphate from D-erythrose 4-phosphate: step 4/5. Its function is as follows. Catalyzes the NAD(P)-dependent oxidation of 4-(phosphooxy)-L-threonine (HTP) into 2-amino-3-oxo-4-(phosphooxy)butyric acid which spontaneously decarboxylates to form 3-amino-2-oxopropyl phosphate (AHAP). This chain is 4-hydroxythreonine-4-phosphate dehydrogenase, found in Chromobacterium violaceum (strain ATCC 12472 / DSM 30191 / JCM 1249 / CCUG 213 / NBRC 12614 / NCIMB 9131 / NCTC 9757 / MK).